A 1108-amino-acid chain; its full sequence is cGMP-inhibited 3',5'-cyclic phosphodiesterase 3B (1108 aa).

A compositionally biased stretch (basic and acidic residues) spans 1–11 (MRKDERERDTP). The disordered stretch occupies residues 1-32 (MRKDERERDTPAMRSPPPPPPPATATAASPPE). Residues 1-32 (MRKDERERDTPAMRSPPPPPPPATATAASPPE) are interaction with RAPGEF3. A compositionally biased stretch (pro residues) spans 14–23 (RSPPPPPPPA). Position 15 is a phosphoserine (serine 15). 6 consecutive transmembrane segments (helical) span residues 73 to 93 (AGAR…LLGA), 114 to 134 (LSLS…CFLT), 144 to 164 (AGSW…FAAW), 175 to 195 (AAAA…LTLA), 204 to 224 (VLVL…LGAL), and 231 to 251 (LLSC…DHFF). Residue serine 279 is modified to Phosphoserine; by PKB/AKT1 or PKB/AKT2. Serine 280 and serine 427 each carry phosphoserine. Residues 405–448 (DRKLHKGLSSKPSFPTAQLRRSSGASGLLTSEHHSRWDRSGGKR) are disordered. Positions 414 to 433 (SKPSFPTAQLRRSSGASGLL) are enriched in polar residues. The segment at 421–445 (AQLRRSSGASGLLTSEHHSRWDRSG) is interaction with PIK3R6. The span at 435–445 (SEHHSRWDRSG) shows a compositional bias: basic and acidic residues. The 438-residue stretch at 633–1070 (PNIDQEVLLD…KIWKEIIEEE (438 aa)) folds into the PDEase domain. The Proton donor role is filled by histidine 719. Residue histidine 719 participates in AMP binding. Positions 723, 803, 804, and 919 each coordinate Mg(2+). Aspartate 804, aspartate 919, and glutamine 970 together coordinate AMP. Acidic residues predominate over residues 999-1033 (EEGDDTESDDDDDDDDDDDDDDDEELDSDDEETED). The disordered stretch occupies residues 999-1042 (EEGDDTESDDDDDDDDDDDDDDDEELDSDDEETEDNLNPKPQRR).

This sequence belongs to the cyclic nucleotide phosphodiesterase family. PDE3 subfamily. As to quaternary structure, homodimer. Interacts with PIK3CG; regulates PDE3B activity and thereby cAMP levels in cells. Interacts with RAPGEF3 and PIK3R6; form a signaling complex that regulates phosphatidylinositol 3-kinase gamma in angiogenesis. Interacts with ABHD15; this interaction regulates PDE3B's stability and expression and, thereby, impacts the antilipolytic action of insulin. It depends on Mg(2+) as a cofactor. Mn(2+) is required as a cofactor. Post-translationally, phosphorylation at Ser-279 mediates insulin-induced activation of PDE3B. As to expression, abundant in adipose tissues.

It is found in the membrane. The catalysed reaction is a nucleoside 3',5'-cyclic phosphate + H2O = a nucleoside 5'-phosphate + H(+). It carries out the reaction 3',5'-cyclic AMP + H2O = AMP + H(+). It catalyses the reaction 3',5'-cyclic GMP + H2O = GMP + H(+). With respect to regulation, inhibited by cGMP. Cyclic nucleotide phosphodiesterase with a dual-specificity for the second messengers cAMP and cGMP, which are key regulators of many important physiological processes. Regulates angiogenesis by inhibiting the cAMP-dependent guanine nucleotide exchange factor RAPGEF3 and downstream phosphatidylinositol 3-kinase gamma-mediated signaling. Controls cardiac contractility by reducing cAMP concentration in cardiocytes. The sequence is that of cGMP-inhibited 3',5'-cyclic phosphodiesterase 3B from Rattus norvegicus (Rat).